A 582-amino-acid polypeptide reads, in one-letter code: Solute carrier family 15 member 3 (582 aa).

Residues 1–20 (MSALRAEQQPSRSGERQPLV) form a disordered region. A run of 4 helical transmembrane segments spans residues 33 to 53 (TAAA…FGVT), 77 to 97 (LLFL…ADVY), 102 to 122 (LAIS…LTTI), and 155 to 175 (PYCA…ASSV). A glycan (N-linked (GlcNAc...) asparagine) is linked at N178. A helical membrane pass occupies residues 201–221 (WFYWSINLGAILSLLVVAFIE). N-linked (GlcNAc...) asparagine glycosylation is present at N223. The next 2 helical transmembrane spans lie at 232–252 (IIVG…PVFI) and 312–332 (FQVL…WMVY). N357 carries an N-linked (GlcNAc...) asparagine glycan. The next 2 membrane-spanning stretches (helical) occupy residues 371 to 391 (IPEA…VPVK) and 409 to 429 (LQKM…AGVL). N440 carries an N-linked (GlcNAc...) asparagine glycan. 3 helical membrane-spanning segments follow: residues 466–485 (YLLI…EFAY), 498–518 (GIFF…VALL), and 541–561 (LYFF…LWIA). An N-linked (GlcNAc...) asparagine glycan is attached at N575.

It belongs to the major facilitator superfamily. Proton-dependent oligopeptide transporter (POT/PTR) (TC 2.A.17) family. In terms of tissue distribution, abundant expression in lung, spleen and thymus, and detected faintly in brain, liver, adrenal gland and heart at protein level.

The protein localises to the lysosome membrane. It is found in the endosome membrane. It carries out the reaction N-acetyl-D-muramoyl-L-alanyl-D-isoglutamine(out) + n H(+)(out) = N-acetyl-D-muramoyl-L-alanyl-D-isoglutamine(in) + n H(+)(in). It catalyses the reaction glycylglycylglycine(out) + n H(+)(out) = glycylglycylglycine(in) + n H(+)(in). The catalysed reaction is carnosine(out) + n H(+)(out) = carnosine(in) + n H(+)(in). The enzyme catalyses L-histidine(out) + n H(+)(out) = L-histidine(in) + n H(+)(in). Functionally, proton-coupled amino-acid transporter that transports free histidine and certain di- and tripeptides, and is involved in innate immune response. Also able to transport carnosine. Involved in the detection of microbial pathogens by toll-like receptors (TLRs) and NOD-like receptors (NLRs), probably by mediating transport of bacterial peptidoglycans across the endolysosomal membrane: catalyzes the transport of certain bacterial peptidoglycans, such as muramyl dipeptide (MDP), the NOD2 ligand. This is Solute carrier family 15 member 3 (Slc15a3) from Rattus norvegicus (Rat).